Reading from the N-terminus, the 473-residue chain is Proton-coupled folate transporter (473 aa).

Over residues 1-20 (MAAPSDPPTAATPPAPPPPA) the composition is skewed to pro residues. The disordered stretch occupies residues 1-21 (MAAPSDPPTAATPPAPPPPAR). At 1–29 (MAAPSDPPTAATPPAPPPPARRCLLAPSV) the chain is on the cytoplasmic side. The helical transmembrane segment at 30-48 (EPLLFLATLALGLQVPLAT) threads the bilayer. Over 49–90 (QYLWDRLGAERGYVGPNASSPHGCGNGSGAVDPLREEVEALV) the chain is Extracellular. N-linked (GlcNAc...) asparagine glycosylation is found at Asn65 and Asn74. Cys72 and Cys306 form a disulfide bridge. Residues 91-116 (AHWNLCINLGGFFVGLFSVTLFGPWS) traverse the membrane as a helical segment. Asn98 provides a ligand contact to pemetrexed. Residues 117-120 (DSVG) are Cytoplasmic-facing. A helical membrane pass occupies residues 121–143 (RRPVLVLPAVGMAVQAAVYLLVM). Topologically, residues 144-148 (YLRLH) are extracellular. The chain crosses the membrane as a helical span at residues 149-162 (VAYLLLGRIISGLL). Residues 163–185 (GDYNLILAGCFASVADSSNQRTR) are Cytoplasmic-facing. Positions 164 and 193 each coordinate H(+). A helical transmembrane segment spans residues 186–211 (TFRVAILEACLGVAGMVASVGGGQWR). Residue Glu193 coordinates pemetrexed. Topologically, residues 212 to 216 (KAEGY) are extracellular. A helical transmembrane segment spans residues 217–235 (INPFWLVLAASLAAALYAA). The Cytoplasmic portion of the chain corresponds to 236 to 274 (LCLQETVKQRRAAKLLTLQHYKAVYKLYTAPEDLSSRRK). The chain crosses the membrane as a helical span at residues 275 to 297 (LALYSLAFFLLVTVHFGTKDLYV). His289 serves as a coordination point for H(+). Over 298–310 (LYELGSPLCWASD) the chain is Extracellular. A helical membrane pass occupies residues 311-333 (LIGYGSAASYLAYLSSLGGLRLL). Tyr323 contributes to the pemetrexed binding site. The Cytoplasmic portion of the chain corresponds to 334–339 (QLCLED). A helical transmembrane segment spans residues 340-359 (TWVAEIGLISNIAGLVVISL). Residues 360–363 (ATTT) are Extracellular-facing. Residues 364–384 (PLMFTGYGIMFLSMAATPVIR) form a helical membrane-spanning segment. Residues 385–396 (AKLSKLVGETEQ) are Cytoplasmic-facing. A helical membrane pass occupies residues 397–422 (GALFASVACVEGLCSLVATGVFNSLY). Residues Glu407 and Ser411 each contribute to the pemetrexed site. At 423 to 430 (PSTLHFMR) the chain is on the extracellular side. The helical transmembrane segment at 431–449 (GFPFLFGAILLLIPAAIMG) threads the bilayer. The Cytoplasmic segment spans residues 450–473 (WIEIQDSNLQYSHFSDASSSPADG).

This sequence belongs to the major facilitator superfamily. SLC46A family. Monomer. Widely expressed, including brain, aorta, liver, kidney, spleen, small intestine, pancreas, ovary and testis.

The protein localises to the cell membrane. It localises to the apical cell membrane. The protein resides in the basolateral cell membrane. Its subcellular location is the endosome membrane. It is found in the cytoplasm. The catalysed reaction is folate(in) + H(+)(in) = folate(out) + H(+)(out). The enzyme catalyses (6S)-5-methyl-5,6,7,8-tetrahydrofolate(in) + H(+)(in) = (6S)-5-methyl-5,6,7,8-tetrahydrofolate(out) + H(+)(out). It carries out the reaction methotrexate(in) + H(+)(in) = methotrexate(out) + H(+)(out). It catalyses the reaction pemetrexed(in) + H(+)(in) = pemetrexed(out) + H(+)(out). Proton-coupled folate symporter that mediates folate absorption using an H(+) gradient as a driving force. Involved in the intestinal absorption of folates at the brush-border membrane of the proximal jejunum, and the transport from blood to cerebrospinal fluid across the choroid plexus. Functions at acidic pH via alternate outward- and inward-open conformation states. Protonation of residues in the outward open state primes the protein for transport. Binding of folate promotes breaking of salt bridge network and subsequent closure of the extracellular gate, leading to the inward-open state and release of protons and folate. Also able to transport antifolate drugs, such as methotrexate and pemetrexed. Also acts as a lower-affinity, pH-independent heme carrier protein and constitutes the main importer of heme in the intestine. Imports heme in the retina and retinal pigment epithelium, in neurons of the hippocampus, in hepatocytes and in the renal epithelial cells. This chain is Proton-coupled folate transporter, found in Gallus gallus (Chicken).